Here is a 940-residue protein sequence, read N- to C-terminus: MDDYKDTLNLPKTLFSMRGNLSKKEPNILKSWNENNLYKLIRKKNQEKKIFFLHDGPPYANGNIHIGHAVNKILKDIIIKSKNMSGFDAPYIPSWDCHGLPIEQKVEEKIKSNQGEISTTEFQEKCRKYAQDQVEKQKKDFIRLGVIGDWDNPHLTMNFKNEANIIKTLSKIVQKKHLYQDFKPIHWCLKCASSLSEAEIEYSKKKSDSIIVGFKFKYKSIIEKLFDFQISNKKEIHLLIWTTTPWTLPSSKAISIHPDFQYQLIETERCYLIIAKELVEKTLNTLKIKKSIIRNYVKGRFLEKMICLHPFLKNIDLPVILGKHVTLESGTGAVHTAPDHGLEDYIISQKYNIKTSNIVNFKGEYISNTHDKLDGVNVLEANSIIIELLIKNNTFFHHESLIHSYPHCWRHKSPVIYRATPQWFIDIDQKQLRIKLLQEIKKVRWIPEWGESRIGEMIKKRPDWCISRQRKWGVPMSIFIHKNTRKIHPNTFVFMKKIAKKVELEGLQVWWNIDSKEILGEEYQSYEKILDILDVWFESGNTHTTINYKNKNYTKKNADMFLEGSDQHRGWFMSSLIISTLISEKKPYSEVLTHGFVVDGKGQKMSKSIGNTISPNEIVDTLGADILRLWVASSNYSNDISISNEILKSSSDIYRRIRNTARFMLANISDFDPKKNIISKENMVLLDKWAIGQTKIVQEEIIQHYNNYNFHAVIQRLMYFCSIEMGSFYLDIIKDRQYTLKKHSQERRSSQTAIYYIINSLVRWIAPILSFTADEIWSYLPENNSQYVFMEEWFDKLFYLDQDDLFNYQFWNEIITIKHEINKFLEEAIQNKTINNSLETSIILYVSHELSNKLKILEQETKFIFLTSDIQIKLYDTAPKNAKKSKIVPYLKVSLEKIKGKKCPRCWHYFNFTKKNIKNSDICNRCILNTIGNGEKRIFI.

A 'HIGH' region motif is present at residues 58–68 (PYANGNIHIGH). Glu-563 provides a ligand contact to L-isoleucyl-5'-AMP. Positions 604–608 (KMSKS) match the 'KMSKS' region motif. An ATP-binding site is contributed by Lys-607. Positions 903, 906, 923, and 926 each coordinate Zn(2+).

This sequence belongs to the class-I aminoacyl-tRNA synthetase family. IleS type 1 subfamily. As to quaternary structure, monomer. Zn(2+) serves as cofactor.

The protein localises to the cytoplasm. It catalyses the reaction tRNA(Ile) + L-isoleucine + ATP = L-isoleucyl-tRNA(Ile) + AMP + diphosphate. Catalyzes the attachment of isoleucine to tRNA(Ile). As IleRS can inadvertently accommodate and process structurally similar amino acids such as valine, to avoid such errors it has two additional distinct tRNA(Ile)-dependent editing activities. One activity is designated as 'pretransfer' editing and involves the hydrolysis of activated Val-AMP. The other activity is designated 'posttransfer' editing and involves deacylation of mischarged Val-tRNA(Ile). This is Isoleucine--tRNA ligase from Buchnera aphidicola subsp. Acyrthosiphon pisum (strain APS) (Acyrthosiphon pisum symbiotic bacterium).